The primary structure comprises 84 residues: Large ribosomal subunit protein bL27 (84 aa).

Positions 1–25 (MSHKKAGGSTRNGRDSNAQRRGVKK) are disordered.

This sequence belongs to the bacterial ribosomal protein bL27 family.

The chain is Large ribosomal subunit protein bL27 from Desulforapulum autotrophicum (strain ATCC 43914 / DSM 3382 / VKM B-1955 / HRM2) (Desulfobacterium autotrophicum).